The chain runs to 294 residues: Nucleotide-binding protein CLJ_B3680 (294 aa).

8–15 is an ATP binding site; it reads GLSGAGKT. 59-62 contacts GTP; it reads DIRG.

Belongs to the RapZ-like family.

Its function is as follows. Displays ATPase and GTPase activities. This chain is Nucleotide-binding protein CLJ_B3680, found in Clostridium botulinum (strain 657 / Type Ba4).